Consider the following 330-residue polypeptide: UPF0324 membrane protein BT_4609 (330 aa).

Transmembrane regions (helical) follow at residues 16–33 (IYVA…LDYI), 38–60 (AWSA…LTCG), 73–95 (YLLQ…LASG), 99–116 (MEFT…GWFI), 128–150 (SYLI…GPVL), 160–182 (ALGT…GHAL), 189–211 (FGTW…AAYG), 221–240 (IKLT…SFIF), 247–269 (ISIP…LLNG), and 284–306 (TLTI…SVGV).

Belongs to the UPF0324 family.

Its subcellular location is the cell membrane. The polypeptide is UPF0324 membrane protein BT_4609 (Bacteroides thetaiotaomicron (strain ATCC 29148 / DSM 2079 / JCM 5827 / CCUG 10774 / NCTC 10582 / VPI-5482 / E50)).